The primary structure comprises 314 residues: Protoheme IX farnesyltransferase (314 aa).

The next 8 membrane-spanning stretches (helical) occupy residues 31–51 (VMSLVIFTALVGMAMAPGHFH), 52–72 (PVLAITSLLCIAVGAGASGAL), 119–139 (ILVNWIAGALLAFTIFFYVVI), 152–172 (IVIGGAAGALPPVVAWAAVTG), 179–199 (LLLFAIIFFWTPPHFWALALF), 225–245 (ILLYTIVLIAVAAAPWALGYF), 247–267 (AVYGVVSLILGAGMLVLAINV), and 284–304 (FAFSILYLFALFATLLAEVVF).

This sequence belongs to the UbiA prenyltransferase family. Protoheme IX farnesyltransferase subfamily.

It is found in the cell inner membrane. It carries out the reaction heme b + (2E,6E)-farnesyl diphosphate + H2O = Fe(II)-heme o + diphosphate. It functions in the pathway porphyrin-containing compound metabolism; heme O biosynthesis; heme O from protoheme: step 1/1. Functionally, converts heme B (protoheme IX) to heme O by substitution of the vinyl group on carbon 2 of heme B porphyrin ring with a hydroxyethyl farnesyl side group. In Bradyrhizobium diazoefficiens (strain JCM 10833 / BCRC 13528 / IAM 13628 / NBRC 14792 / USDA 110), this protein is Protoheme IX farnesyltransferase.